Here is a 414-residue protein sequence, read N- to C-terminus: Glucose-6-phosphate isomerase (414 aa).

Residue Glu-266 is the Proton donor of the active site. Residues His-292 and Lys-405 contribute to the active site.

Belongs to the GPI family.

The protein resides in the cytoplasm. The catalysed reaction is alpha-D-glucose 6-phosphate = beta-D-fructose 6-phosphate. It participates in carbohydrate biosynthesis; gluconeogenesis. The protein operates within carbohydrate degradation; glycolysis; D-glyceraldehyde 3-phosphate and glycerone phosphate from D-glucose: step 2/4. Catalyzes the reversible isomerization of glucose-6-phosphate to fructose-6-phosphate. This is Glucose-6-phosphate isomerase from Thermus thermophilus (strain ATCC BAA-163 / DSM 7039 / HB27).